The sequence spans 132 residues: Capsid protein (132 aa).

The protein belongs to the Leviviricetes capsid protein family. In terms of assembly, homodimer. The capsid protein dimer binds to the viral RNA via an operator hairpin, but also many other RNA sequences in the viral genome.

It is found in the virion. Functionally, capsid protein self-assembles to form an icosahedral capsid with a T=3 symmetry, about 26 nm in diameter, and consisting of 89 capsid proteins dimers (178 capsid proteins). Involved in viral genome encapsidation through the interaction between a capsid protein dimer and the multiple packaging signals present in the RNA genome. Binding of the capsid proteins to the viral RNA induces a conformational change required for efficient T=3 shell formation. The capsid also contains 1 copy of the A2 maturation protein. Its function is as follows. Acts as a translational repressor of viral replicase synthesis late in infection. This latter function is the result of capsid protein interaction with an RNA hairpin which contains the replicase ribosome-binding site. The protein is Capsid protein of Enterobacteria phage SP (Bacteriophage SP).